Consider the following 428-residue polypeptide: uncharacterized protein (428 aa).

The interval M1–Q49 is disordered. Residues S24–Q49 show a composition bias toward polar residues.

This is an uncharacterized protein from Caenorhabditis elegans.